Here is a 181-residue protein sequence, read N- to C-terminus: TATA-box-binding protein C (181 aa).

Tandem repeats lie at residues 5-83 (IANI…LGML) and 99-177 (VENV…QSKV).

It belongs to the TBP family.

Its function is as follows. General factor that plays a role in the activation of archaeal genes transcribed by RNA polymerase. Binds specifically to the TATA box promoter element which lies close to the position of transcription initiation. In Halobacterium salinarum (strain ATCC 700922 / JCM 11081 / NRC-1) (Halobacterium halobium), this protein is TATA-box-binding protein C (tbpC1).